An 86-amino-acid polypeptide reads, in one-letter code: Defensin-like SRCA-homolog protein (86 aa).

The signal sequence occupies residues 1 to 26 (MRCVVLFMVSCLLIVLLINHFEEVEA). Intrachain disulfides connect cysteine 32/cysteine 84, cysteine 42/cysteine 70, cysteine 52/cysteine 79, and cysteine 68/cysteine 81.

Belongs to the DEFL family.

It is found in the secreted. Involved in male-mediated self-incompatibility. This Arabidopsis lyrata (Lyre-leaved rock-cress) protein is Defensin-like SRCA-homolog protein (SCR37).